The primary structure comprises 354 residues: Magnesium-protoporphyrin IX monomethyl ester [oxidative] cyclase 2 (354 aa).

Belongs to the AcsF family. The cofactor is Fe cation.

It catalyses the reaction Mg-protoporphyrin IX 13-monomethyl ester + 3 NADPH + 3 O2 + 2 H(+) = 3,8-divinyl protochlorophyllide a + 3 NADP(+) + 5 H2O. It participates in porphyrin-containing compound metabolism; chlorophyll biosynthesis (light-independent). Functionally, catalyzes the formation of the isocyclic ring in chlorophyll biosynthesis. Mediates the cyclase reaction, which results in the formation of divinylprotochlorophyllide (Pchlide) characteristic of all chlorophylls from magnesium-protoporphyrin IX 13-monomethyl ester (MgPMME). This is Magnesium-protoporphyrin IX monomethyl ester [oxidative] cyclase 2 from Thermosynechococcus vestitus (strain NIES-2133 / IAM M-273 / BP-1).